Reading from the N-terminus, the 277-residue chain is Soluble NSF attachment protein 29 (277 aa).

Over residues 1-11 the composition is skewed to basic and acidic residues; it reads MSRNPFDDDYR. Disordered regions lie at residues 1–30, 49–73, and 117–170; these read MSRN…MGHY, ESLD…STAQ, and KFTK…ESSR. The segment covering 14–28 has biased composition (polar residues); it reads AASSTMPVKSYTTMG. A t-SNARE coiled-coil homology 1 domain is found at 44 to 106; the sequence is EKTLQESLDS…QMTQRNLNSL (63 aa). Positions 49-65 are enriched in basic and acidic residues; sequence ESLDSTERSRRHLENSE. Over residues 134-170 the composition is skewed to polar residues; that stretch reads SKSASRLSETATNLSSGGGSATFSGPSGQRTLTESSR. The region spanning 179–241 is the t-SNARE coiled-coil homology 2 domain; it reads EAMDNQIDEN…RDQDKQMQKI (63 aa).

This sequence belongs to the SNAP-25 family.

The protein resides in the synapse. Its subcellular location is the synaptosome. Functionally, SNAREs, soluble N-ethylmaleimide-sensitive factor-attachment protein receptors, are essential proteins for fusion of cellular membranes. SNAREs localized on opposing membranes assemble to form a trans-SNARE complex, an extended, parallel four alpha-helical bundle that drives membrane fusion. Plays a role in the processing and secretion of the aspartic protease hrg-7 from the intestine. In Caenorhabditis elegans, this protein is Soluble NSF attachment protein 29.